A 395-amino-acid polypeptide reads, in one-letter code: Protein BUR2 (395 aa).

Disordered regions lie at residues 1–31 and 372–395; these read MSAT…ASSG and AKQE…KPKI. Ser-24 is subject to Phosphoserine.

In terms of assembly, belongs to the BUR kinase complex composed of SGV1/BUR1 and BUR2. Interacts with SGV1.

Its subcellular location is the nucleus. Its function is as follows. Component of the BUR kinase complex involved in transcription regulation. This complex phosphorylates 'Ser-120' of the UBC2/RAD6 ubiquitin-conjugating enzyme (E2), leading to monoubiquitination of histone H2B, the localization of the PAF1 complex to the chromatin, and the silencing of telomeric-associated genes. Also required for histone H3 'Lys-4' trimethylation. May phosphorylate the 'Ser-5' of the RBP1 carboxy-terminal domain (CTD) repeats. Necessary for the recovery from pheromone-induced growth arrest in the cell cycle G1 phase. Also required for vegetative growth itself. The kinase activity of the complex requires the presence of BUR2. Overexpression of BUR2 interferes with mitotic chromosome segregation. The protein is Protein BUR2 (BUR2) of Saccharomyces cerevisiae (strain ATCC 204508 / S288c) (Baker's yeast).